We begin with the raw amino-acid sequence, 479 residues long: Ribosomal RNA small subunit methyltransferase F (479 aa).

S-adenosyl-L-methionine-binding positions include 125-131, Glu149, Asp176, and Asp194; that span reads AAAPGSK. Residue Cys247 is the Nucleophile of the active site.

Belongs to the class I-like SAM-binding methyltransferase superfamily. RsmB/NOP family.

The protein resides in the cytoplasm. The enzyme catalyses cytidine(1407) in 16S rRNA + S-adenosyl-L-methionine = 5-methylcytidine(1407) in 16S rRNA + S-adenosyl-L-homocysteine + H(+). Functionally, specifically methylates the cytosine at position 1407 (m5C1407) of 16S rRNA. This Escherichia coli (strain ATCC 8739 / DSM 1576 / NBRC 3972 / NCIMB 8545 / WDCM 00012 / Crooks) protein is Ribosomal RNA small subunit methyltransferase F.